Reading from the N-terminus, the 89-residue chain is UPF0147 protein Msed_2034 (89 aa).

It belongs to the UPF0147 family.

The chain is UPF0147 protein Msed_2034 from Metallosphaera sedula (strain ATCC 51363 / DSM 5348 / JCM 9185 / NBRC 15509 / TH2).